The following is a 165-amino-acid chain: Protein SprT (165 aa).

The region spanning 10–157 is the SprT-like domain; it reads EACYRQAEDF…YCRRCKATLV (148 aa). Histidine 69 serves as a coordination point for Zn(2+). Residue glutamate 70 is part of the active site. Zn(2+) is bound at residue histidine 73.

It belongs to the SprT family. Zn(2+) serves as cofactor.

It is found in the cytoplasm. The chain is Protein SprT from Pseudomonas paraeruginosa (strain DSM 24068 / PA7) (Pseudomonas aeruginosa (strain PA7)).